Reading from the N-terminus, the 110-residue chain is PHD finger-like domain-containing protein 5A (110 aa).

An N-acetylalanine modification is found at Ala-2. Position 3 is an N6-acetyllysine (Lys-3). Residues Cys-11, Cys-23, Cys-26, Cys-30, Cys-33, Cys-46, Cys-49, Cys-58, Cys-61, Cys-72, and Cys-75 each contribute to the Zn(2+) site. The segment at 35-51 (SYVRPCTLVRICDECNY) is interaction with SF3B1 and SF3B3. The segment at 79 to 82 (EKDR) is interaction with SF3B3. Cys-85 lines the Zn(2+) pocket. Residue Ser-94 is modified to Phosphoserine.

It belongs to the PHF5 family. As to quaternary structure, component of the 17S U2 SnRNP complex, a ribonucleoprotein complex that contains small nuclear RNA (snRNA) U2 and a number of specific proteins. Part of the SF3B subcomplex of the 17S U2 SnRNP complex. SF3B associates with the splicing subcomplex SF3A and a 12S RNA unit to form the U2 small nuclear ribonucleoproteins complex (U2 snRNP). Within the SF3B complex interacts directly with SF3B1 and SF3B3. Component of the minor spliceosome, which splices U12-type introns. Within this complex, interacts with CRIPT. Interacts (via N-terminus) with U2AF1 and SRSF5; acts to bridge the two. Interacts (via C-terminus) with EP400 and DDX1; acts to bridge the two. Interacts with the PAF1 complex (PAF1C) composed of CDC73, PAF1, LEO1, CTR9, RTF1 and SKIC8. Within the PAF1C interacts directly with CDC73 and SKIC8. Interacts with RNA polymerase II. In terms of tissue distribution, expressed in primary spermatocytes (at protein level). Ubiquitously expressed in pre- and postnatal tissues. Highly expressed in pluripotent embryonic stem cells (ESCs) (at protein level) and induced pluripotent stem cells (iPSCs).

It localises to the nucleus. The protein resides in the nucleus speckle. Functionally, component of the 17S U2 SnRNP complex of the spliceosome, a large ribonucleoprotein complex that removes introns from transcribed pre-mRNAs. The 17S U2 SnRNP complex (1) directly participates in early spliceosome assembly and (2) mediates recognition of the intron branch site during pre-mRNA splicing by promoting the selection of the pre-mRNA branch-site adenosine, the nucleophile for the first step of splicing. Within the 17S U2 SnRNP complex, PHF5A is part of the SF3B subcomplex, which is required for 'A' complex assembly formed by the stable binding of U2 snRNP to the branchpoint sequence in pre-mRNA. Sequence independent binding of SF3A and SF3B subcomplexes upstream of the branch site is essential, it may anchor U2 snRNP to the pre-mRNA. Also acts as a component of the minor spliceosome, which is involved in the splicing of U12-type introns in pre-mRNAs. Also involved in elongation by RNA polymerase II as part of the PAF1 complex (PAF1C). PAF1C is required for maintenance of embryonic stem cell (ESC) self-renewal and cellular reprogramming of stem cells. Maintains pluripotency by recruiting and stabilizing PAF1C on pluripotency genes loci, and by regulating the expression of the pluripotency genes. Regulates the deposition of elongation-associated histone modifications, including dimethylated histone H3 'Lys-79' (H3K79me2) and trimethylated histone H3 'Lys-36' (H3K36me3), on PAF1C targets, self-renewal and pluripotency genes. Regulates RNA polymerase II promoter-proximal pause release of the PAF1C targets and self-renewal genes, and the levels of elongating ('Ser-2' phosphorylated) RNA polymerase II in their gene bodies. Regulates muscle specification in adult stem cells by stabilizing PAF1C in chromatin to promote myogenic differentiation. Acts as a transcriptional regulator by binding to the GJA1/Cx43 promoter and enhancing its up-regulation by ESR1/ER-alpha. This Mus musculus (Mouse) protein is PHD finger-like domain-containing protein 5A (Phf5a).